Consider the following 400-residue polypeptide: Ornithine aminotransferase (400 aa).

At Lys254 the chain carries N6-(pyridoxal phosphate)lysine.

It belongs to the class-III pyridoxal-phosphate-dependent aminotransferase family. OAT subfamily. It depends on pyridoxal 5'-phosphate as a cofactor.

It is found in the cytoplasm. It catalyses the reaction a 2-oxocarboxylate + L-ornithine = L-glutamate 5-semialdehyde + an L-alpha-amino acid. The protein operates within amino-acid biosynthesis; L-proline biosynthesis; L-glutamate 5-semialdehyde from L-ornithine: step 1/1. Its function is as follows. Catalyzes the interconversion of ornithine to glutamate semialdehyde. This is Ornithine aminotransferase from Exiguobacterium sp. (strain ATCC BAA-1283 / AT1b).